Consider the following 325-residue polypeptide: Post-GPI attachment to proteins factor 2-like (325 aa).

Transmembrane regions (helical) follow at residues Val-80–Phe-100, Tyr-130–Tyr-150, Leu-171–Thr-191, Ile-205–Gly-225, Trp-243–Ala-263, and Trp-276–Ile-296.

Belongs to the PGAP2 family.

Its subcellular location is the membrane. This chain is Post-GPI attachment to proteins factor 2-like, found in Drosophila melanogaster (Fruit fly).